The sequence spans 332 residues: Ribonucleoside-diphosphate reductase small chain C (332 aa).

Fe cation is bound by residues D76, E107, and H110. The active site involves Y114. Fe cation is bound by residues E169, E203, and H206.

Belongs to the ribonucleoside diphosphate reductase small chain family. In terms of assembly, homodimer and heterodimer with RNR2A. Heterotetramer of two R1 and two R2 chains. Interacts with CSN7 (via C-terminal tail). Fe cation is required as a cofactor. In terms of tissue distribution, expressed in roots, cauline and rosette leaves, stems and flowers.

It localises to the cytoplasm. The protein localises to the nucleus. It carries out the reaction a 2'-deoxyribonucleoside 5'-diphosphate + [thioredoxin]-disulfide + H2O = a ribonucleoside 5'-diphosphate + [thioredoxin]-dithiol. Provides the precursors necessary for DNA synthesis. Catalyzes the biosynthesis of deoxyribonucleotides from the corresponding ribonucleotides. Involved in DNA damage repair and programmed cell death inhibition. The sequence is that of Ribonucleoside-diphosphate reductase small chain C (TSO2) from Arabidopsis thaliana (Mouse-ear cress).